Reading from the N-terminus, the 338-residue chain is tRNA N6-adenosine threonylcarbamoyltransferase (338 aa).

Positions 111 and 115 each coordinate Fe cation. Substrate-binding positions include 134 to 138 (LVSGG), aspartate 167, glycine 180, and asparagine 272. Aspartate 300 is a Fe cation binding site.

The protein belongs to the KAE1 / TsaD family. It depends on Fe(2+) as a cofactor.

Its subcellular location is the cytoplasm. It catalyses the reaction L-threonylcarbamoyladenylate + adenosine(37) in tRNA = N(6)-L-threonylcarbamoyladenosine(37) in tRNA + AMP + H(+). Functionally, required for the formation of a threonylcarbamoyl group on adenosine at position 37 (t(6)A37) in tRNAs that read codons beginning with adenine. Is involved in the transfer of the threonylcarbamoyl moiety of threonylcarbamoyl-AMP (TC-AMP) to the N6 group of A37, together with TsaE and TsaB. TsaD likely plays a direct catalytic role in this reaction. This chain is tRNA N6-adenosine threonylcarbamoyltransferase, found in Nitrosomonas eutropha (strain DSM 101675 / C91 / Nm57).